Reading from the N-terminus, the 725-residue chain is Ribosomal RNA large subunit methyltransferase K/L (725 aa).

One can recognise a THUMP domain in the interval 46–157 (VGYRLCLWSR…KGQAVLSLDL (112 aa)).

This sequence belongs to the methyltransferase superfamily. RlmKL family.

It localises to the cytoplasm. The catalysed reaction is guanosine(2445) in 23S rRNA + S-adenosyl-L-methionine = N(2)-methylguanosine(2445) in 23S rRNA + S-adenosyl-L-homocysteine + H(+). It carries out the reaction guanosine(2069) in 23S rRNA + S-adenosyl-L-methionine = N(2)-methylguanosine(2069) in 23S rRNA + S-adenosyl-L-homocysteine + H(+). Its function is as follows. Specifically methylates the guanine in position 2445 (m2G2445) and the guanine in position 2069 (m7G2069) of 23S rRNA. This is Ribosomal RNA large subunit methyltransferase K/L from Stutzerimonas stutzeri (strain A1501) (Pseudomonas stutzeri).